A 459-amino-acid chain; its full sequence is Asperlicin C monooxygenase (459 aa).

Asp49, Ala62, and Arg121 together coordinate FAD. The active site involves Arg199. Asp323 and Ala336 together coordinate FAD.

It belongs to the paxM FAD-dependent monooxygenase family. The cofactor is FAD.

The enzyme catalyses asperlicin C + NADPH + O2 + H(+) = asperlicin E + NADP(+) + H2O. It catalyses the reaction asperlicin C + NADH + O2 + H(+) = asperlicin E + NAD(+) + H2O. Catalyzes the conversion of asperlicin A to form asperlicin E, a potent cholecystokinin receptor CCK(A) antagonist. The protein is Asperlicin C monooxygenase of Petromyces alliaceus (Aspergillus alliaceus).